Consider the following 577-residue polypeptide: ER degradation-enhancing alpha-mannosidase-like protein 2 (577 aa).

The first 21 residues, 1-21, serve as a signal peptide directing secretion; it reads MPFRLLIPLGLVCVLLPLHHG. N-linked (GlcNAc...) asparagine glycosylation is found at N90, N112, N289, and N450. Residues 513 to 561 are disordered; that stretch reads PKRAQRKTVRSGPWEPQSGPATLSSPANQPREKQPAQQRTPLLSCPSQP. 2 stretches are compositionally biased toward polar residues: residues 531–540 and 547–561; these read GPATLSSPAN and PAQQ…PSQP.

Belongs to the glycosyl hydrolase 47 family. Post-translationally, N-glycosylated.

The protein localises to the endoplasmic reticulum lumen. In terms of biological role, involved in the endoplasmic reticulum-associated degradation (ERAD) pathway that targets misfolded glycoproteins for degradation in an N-glycan-dependent manner. May initiate ERAD by promoting the first mannose trimming step of ERAD substrates, from Man9GlcNAc2 to Man8GlcNAc2. Seems to recognize and bind to exposed hydrophobic regions in target proteins. The sequence is that of ER degradation-enhancing alpha-mannosidase-like protein 2 from Mus musculus (Mouse).